We begin with the raw amino-acid sequence, 313 residues long: Glyoxylate/hydroxypyruvate reductase A (313 aa).

Residue R228 is part of the active site. The active-site Proton donor is H276.

The protein belongs to the D-isomer specific 2-hydroxyacid dehydrogenase family. GhrA subfamily.

It localises to the cytoplasm. The enzyme catalyses glycolate + NADP(+) = glyoxylate + NADPH + H(+). It catalyses the reaction (R)-glycerate + NAD(+) = 3-hydroxypyruvate + NADH + H(+). The catalysed reaction is (R)-glycerate + NADP(+) = 3-hydroxypyruvate + NADPH + H(+). Functionally, catalyzes the NADPH-dependent reduction of glyoxylate and hydroxypyruvate into glycolate and glycerate, respectively. This Yersinia enterocolitica serotype O:8 / biotype 1B (strain NCTC 13174 / 8081) protein is Glyoxylate/hydroxypyruvate reductase A.